Here is a 518-residue protein sequence, read N- to C-terminus: 4-trimethylaminobutyraldehyde dehydrogenase B (518 aa).

Residues Lys204 and 256-260 (GSVPT) contribute to the NAD(+) site. The Proton acceptor role is filled by Glu278. The active-site Nucleophile is Cys312. Glu415 lines the NAD(+) pocket.

It belongs to the aldehyde dehydrogenase family. As to quaternary structure, homotetramer.

Its subcellular location is the cytoplasm. The protein localises to the cytosol. It catalyses the reaction 4-(trimethylamino)butanal + NAD(+) + H2O = 4-(trimethylamino)butanoate + NADH + 2 H(+). It carries out the reaction an aldehyde + NAD(+) + H2O = a carboxylate + NADH + 2 H(+). It functions in the pathway amine and polyamine biosynthesis; carnitine biosynthesis. Its function is as follows. Converts gamma-trimethylaminobutyraldehyde into gamma-butyrobetaine with high efficiency (in vitro). Can catalyze the irreversible oxidation of a broad range of aldehydes to the corresponding acids in an NAD-dependent reaction, but with low efficiency. The protein is 4-trimethylaminobutyraldehyde dehydrogenase B (aldh9a1b) of Danio rerio (Zebrafish).